Reading from the N-terminus, the 484-residue chain is Poly(A) RNA polymerase GLD2 (484 aa).

Phosphoserine occurs at positions 62 and 69. The interval 72 to 97 is disordered; that stretch reads FRGRKRLSDEKNLPLDGKRQRFHSPH. Positions 76–92 match the Nuclear localization signal motif; it reads KRLSDEKNLPLDGKRQR. The span at 77–90 shows a compositional bias: basic and acidic residues; that stretch reads RLSDEKNLPLDGKR. Position 95 is a phosphoserine (Ser95). Asp213 and Asp215 together coordinate Mg(2+). A PAP-associated domain is found at 386-440; it reads NLGDLLLGFLKYYATEFDWNSQMISVREAKAIPRPDGIEWRNKYICVEEPFDGTN.

Belongs to the DNA polymerase type-B-like family. GLD2 subfamily. In terms of assembly, interacts with CPEB1, CPEB2, CPSF1 and PABPC1. Interacts with QKI isoform QKI7; promoting recruitment to miRNA miR-122 and miR-122 stabilization. It depends on Mg(2+) as a cofactor. Requires Mn(2+) as cofactor. Expressed in brain. Within brain, it is expressed in cerebellum, hippocampus and medulla.

Its subcellular location is the cytoplasm. It is found in the nucleus. It catalyses the reaction RNA(n) + ATP = RNA(n)-3'-adenine ribonucleotide + diphosphate. Functionally, cytoplasmic poly(A) RNA polymerase that adds successive AMP monomers to the 3'-end of specific RNAs, forming a poly(A) tail. In contrast to the canonical nuclear poly(A) RNA polymerase, it only adds poly(A) to selected cytoplasmic mRNAs. Does not play a role in replication-dependent histone mRNA degradation. Adds a single nucleotide to the 3' end of specific miRNAs, monoadenylation stabilizes and prolongs the activity of some but not all miRNAs. The protein is Poly(A) RNA polymerase GLD2 of Homo sapiens (Human).